The following is an 845-amino-acid chain: Nuclear pore complex protein Nup107 (845 aa).

Disordered stretches follow at residues 1 to 26 (MADS…MPPQ) and 677 to 702 (QNRP…MASE). 2 stretches are compositionally biased toward polar residues: residues 7 to 26 (PRSS…MPPQ) and 685 to 694 (TSHAASSQDN).

The protein belongs to the nucleoporin Nup84/Nup107 family. As to quaternary structure, part of the nuclear pore complex (NPC). In terms of tissue distribution, expressed in spermatocytes (at protein level).

The protein localises to the nucleus. It is found in the nuclear pore complex. It localises to the nucleus envelope. The protein resides in the nucleus membrane. Its subcellular location is the cytoplasm. The protein localises to the cytoskeleton. It is found in the spindle. It localises to the chromosome. The protein resides in the nucleus matrix. Plays a role in nuclear pore complex (NPC) assembly and maintenance. Required for nuclear import of Mad. Mediates the association between the nuclear pore complex and a subset of active chromatin regions adjacent to lamin-associated domains. Plays a role in double strand break repair by relocalizing the heterochromatic double strand breaks (DSBs) to the nuclear periphery as part of the homologous recombination (HR) repair process. Regulates cytokinesis during spermatocyte meiosis by maintaining type-B lamin Lam localization to the spindle envelope. Regulates female gonad development and oogenesis. This chain is Nuclear pore complex protein Nup107, found in Drosophila melanogaster (Fruit fly).